The sequence spans 317 residues: Ribosomal protein L11 methyltransferase (317 aa).

Thr162, Gly183, Asp205, and Asn248 together coordinate S-adenosyl-L-methionine.

The protein belongs to the methyltransferase superfamily. PrmA family.

The protein resides in the cytoplasm. It catalyses the reaction L-lysyl-[protein] + 3 S-adenosyl-L-methionine = N(6),N(6),N(6)-trimethyl-L-lysyl-[protein] + 3 S-adenosyl-L-homocysteine + 3 H(+). Its function is as follows. Methylates ribosomal protein L11. The sequence is that of Ribosomal protein L11 methyltransferase from Alkaliphilus metalliredigens (strain QYMF).